Here is a 593-residue protein sequence, read N- to C-terminus: uncharacterized protein (593 aa).

12 consecutive transmembrane segments (helical) span residues 21-41 (PAVFIPASVVIVAMIVVSVVY), 60-80 (VGWWYILVATGFVVFALYCGI), 97-117 (FSFWAWLAMLFSAGMGIGLVF), 148-168 (MALTVFHWGLHAWAIYVVVGL), 204-224 (VDVIAIVGTLFGVATSLGFGI), 243-263 (WMVGMIAAITATATASVVSGV), 275-295 (MALAAALALFVLLLGPTLFLL), 328-348 (WTIFYWGWWISWAPFVGMFIA), 359-379 (FIGAVLLVPTVIASLWFTIFG), 410-430 (GLPIGAITSVLAVLVIVFFFV), 457-477 (VYWAVLEGVAAAVLLLIGGAG), and 485-505 (AAIATALPFSIVMVVACYAMT).

This sequence belongs to the BCCT transporter (TC 2.A.15) family.

The protein localises to the cell membrane. This is an uncharacterized protein from Mycobacterium tuberculosis (strain CDC 1551 / Oshkosh).